Here is a 534-residue protein sequence, read N- to C-terminus: Serine protease vicPb (534 aa).

Positions 1-17 (MLRYLLIPILYLQVVLG) are cleaved as a signal peptide. N-linked (GlcNAc...) asparagine glycosylation is found at Asn34, Asn65, and Asn126. The Charge relay system role is filled by Ser174. 5 N-linked (GlcNAc...) asparagine glycosylation sites follow: Asn297, Asn335, Asn352, Asn415, and Asn437. Asp451 acts as the Charge relay system in catalysis.

This sequence belongs to the peptidase S28 family.

It functions in the pathway mycotoxin biosynthesis. In terms of biological role, serine protease, part of the gene cluster that mediates the biosynthesis of the secondary metabolite victorin, the molecular basis for Victoria blight of oats. Within the pathway, vicPa and vicPb are probably involved in the processing of the vicA1 and vicA2 precursors. The pathway starts with the processing of the precursor vicA1 by several endopeptidases including kexin proteases as well as the cluster-specific S28 family peptidases vicPa and vicPb to produce 7 identical copies of the hexapeptide Gly-Leu-Lys-Leu-Ala-Phe. After being excised from the precursor peptide, the core peptides are cyclized and modified post-translationally by enzymes encoded within the gene cluster. The ustYa family oxidase vicYb is required for the formation of the macrocycle in victorin and the copper amine oxidases (CAOs) vicK1 and vicK2 are responsible for converting victorin to the active form by oxidizing the N-terminal glycyl residue in the peptides to glyoxylate. Relaxed substrate specificity of enzymes in the victorin biosynthetic pathway results in a metabolic grid that produces a set of analogs including victorinines B, C, E or HV-toxin M. This Bipolaris victoriae (strain FI3) (Victoria blight of oats agent) protein is Serine protease vicPb.